The sequence spans 169 residues: Transmembrane protein B169L (169 aa).

Transmembrane regions (helical) follow at residues 28 to 48 (NPFI…FAIC) and 60 to 80 (TAIY…YVLN). N88 is a glycosylation site (N-linked (GlcNAc...) asparagine; by host). The interval 107–169 (DEIIPPISPP…EVIMPSQYNN (63 aa)) is disordered. Residues 140-154 (KPADSKPASSADSKP) are compositionally biased toward low complexity.

The protein belongs to the asfivirus B169L family.

It localises to the host membrane. The protein localises to the virion. This is Transmembrane protein B169L from Ornithodoros (relapsing fever ticks).